We begin with the raw amino-acid sequence, 550 residues long: Arginine--tRNA ligase (550 aa).

The 'HIGH' region motif lies at 130-140; that stretch reads ANPTGPIHIGG.

Belongs to the class-I aminoacyl-tRNA synthetase family. As to quaternary structure, monomer.

It is found in the cytoplasm. The catalysed reaction is tRNA(Arg) + L-arginine + ATP = L-arginyl-tRNA(Arg) + AMP + diphosphate. The sequence is that of Arginine--tRNA ligase from Mycolicibacterium gilvum (strain PYR-GCK) (Mycobacterium gilvum (strain PYR-GCK)).